The primary structure comprises 206 residues: Glutathione S-transferase class-mu 28 kDa isozyme (206 aa).

A GST N-terminal domain is found at 1 to 81 (VKLIYFNGRG…FIARKHNMMG (81 aa)). Glutathione is bound by residues tyrosine 5, 5–6 (YF), arginine 11, 36–40 (WPKIK), leucine 48, 50–51 (IV), and 65–66 (ES). Residues 83 to 206 (TDDEYYIIEK…YLSERHATAF (124 aa)) form the GST C-terminal domain.

This sequence belongs to the GST superfamily. Mu family. Homodimer.

The enzyme catalyses RX + glutathione = an S-substituted glutathione + a halide anion + H(+). In terms of biological role, conjugation of reduced glutathione to a wide number of exogenous and endogenous hydrophobic electrophiles. GST isoenzymes appear to play a central role in the parasite detoxification system. Other functions are also suspected including a role in increasing the solubility of haematin in the parasite gut. The sequence is that of Glutathione S-transferase class-mu 28 kDa isozyme from Schistosoma japonicum (Blood fluke).